Reading from the N-terminus, the 445-residue chain is Alpha-1,3-mannosyl-glycoprotein 2-beta-N-acetylglucosaminyltransferase (445 aa).

Residues 1–6 are Cytoplasmic-facing; it reads MLKKQS. A helical; Signal-anchor for type II membrane protein membrane pass occupies residues 7–29; that stretch reads AGLVLWGAILFVAWNALLLLFFW. Residues 30–445 lie on the Lumenal side of the membrane; sequence TRPAPGRPPS…TWEGYDPSWN (416 aa). An intrachain disulfide couples C113 to C143. Substrate contacts are provided by R115, D142, H188, and D210. D211 contacts Mn(2+). Residues C237 and C303 are joined by a disulfide bond. D289 (proton acceptor) is an active-site residue. Residue S320 participates in substrate binding.

It belongs to the glycosyltransferase 13 family. Interacts with MGAT4D. Interacts with BRI3 (isoforms 1 and 2); the interaction with isoform 2 is weaker than with isoform 1. Mn(2+) serves as cofactor.

It localises to the golgi apparatus membrane. It is found in the cytoplasm. The protein localises to the perinuclear region. It catalyses the reaction N(4)-(alpha-D-Man-(1-&gt;3)-[alpha-D-Man-(1-&gt;3)-[alpha-D-Man-(1-&gt;6)]-alpha-D-Man-(1-&gt;6)]-beta-D-Man-(1-&gt;4)-beta-D-GlcNAc-(1-&gt;4)-beta-D-GlcNAc)-L-asparaginyl-[protein] (N-glucan mannose isomer 5A1,2) + UDP-N-acetyl-alpha-D-glucosamine = N(4)-{beta-D-GlcNAc-(1-&gt;2)-alpha-D-Man-(1-&gt;3)-[alpha-D-Man-(1-&gt;3)-[alpha-D-Man-(1-&gt;6)]-alpha-D-Man-(1-&gt;6)]-beta-D-Man-(1-&gt;4)-beta-D-GlcNAc-(1-&gt;4)-beta-D-GlcNAc}-L-asparaginyl-[protein] + UDP + H(+). It participates in protein modification; protein glycosylation. Its function is as follows. Initiates complex N-linked carbohydrate formation. Essential for the conversion of high-mannose to hybrid and complex N-glycans. The polypeptide is Alpha-1,3-mannosyl-glycoprotein 2-beta-N-acetylglucosaminyltransferase (MGAT1) (Homo sapiens (Human)).